The following is a 363-amino-acid chain: Pyrimidine monooxygenase RutA (363 aa).

Residues 49-50 (IK), asparagine 115, glutamate 124, 140-141 (RY), and serine 190 each bind FMN.

This sequence belongs to the NtaA/SnaA/DszA monooxygenase family. RutA subfamily.

It catalyses the reaction uracil + FMNH2 + NADH + O2 = (Z)-3-ureidoacrylate + FMN + NAD(+) + H2O + H(+). It carries out the reaction thymine + FMNH2 + NADH + O2 = (Z)-2-methylureidoacrylate + FMN + NAD(+) + H2O + H(+). Catalyzes the pyrimidine ring opening between N-3 and C-4 by an unusual flavin hydroperoxide-catalyzed mechanism, adding oxygen atoms in the process to yield ureidoacrylate peracid, that immediately reacts with FMN forming ureidoacrylate and FMN-N(5)-oxide. The FMN-N(5)-oxide reacts spontaneously with NADH to produce FMN. Requires the flavin reductase RutF to regenerate FMN in vivo. The polypeptide is Pyrimidine monooxygenase RutA (Enterobacter cloacae subsp. cloacae (strain ATCC 13047 / DSM 30054 / NBRC 13535 / NCTC 10005 / WDCM 00083 / NCDC 279-56)).